A 540-amino-acid chain; its full sequence is MPFAEDKTYKYICRNFSNFCNVDVVEILPYLPCLTARDQDRLRATCTLSGNRDTLWHLFNTLQRRPGWVEYFIAALRGCELVDLADEVASVYQSYQPRTSDRPPDPLEPPSLPAERPGPPTPAAAHSIPYNSCREKEPSYPMPVQETQAPESPGENSEQALQTLSPRAIPRNPDGGPLESSSDLAALSPLTSSGHQEQDTELGSTHTAGATSSLTPSRGPVSPSVSFQPLARSTPRASRLPGPTGSVVSTGTSFSSSSPGLASAGAAEGKQGAESDQAEPIICSSGAEAPANSLPSKVPTTLMPVNTVALKVPANPASVSTVPSKLPTSSKPPGAVPSNALTNPAPSKLPINSTRAGMVPSKVPTSMVLTKVSASTVPTDGSSRNEETPAAPTPAGATGGSSAWLDSSSENRGLGSELSKPGVLASQVDSPFSGCFEDLAISASTSLGMGPCHGPEENEYKSEGTFGIHVAENPSIQLLEGNPGPPADPDGGPRPQADRKFQEREVPCHRPSPGALWLQVAVTGVLVVTLLVVLYRRRLH.

Pro2 is modified (N-acetylproline). Residues 2-513 (PFAEDKTYKY…REVPCHRPSP (512 aa)) lie on the Cytoplasmic side of the membrane. Glycyl lysine isopeptide (Lys-Gly) (interchain with G-Cter in ubiquitin) cross-links involve residues Lys7 and Lys10. Positions 10 to 77 (KYICRNFSNF…WVEYFIAALR (68 aa)) constitute a CARD domain. The segment at 10–77 (KYICRNFSNF…WVEYFIAALR (68 aa)) is required for interaction with NLRX1. Residue Cys79 is the site of S-palmitoyl cysteine attachment. Positions 95-297 (YQPRTSDRPP…EAPANSLPSK (203 aa)) are disordered. Pro residues predominate over residues 106–122 (PLEPPSLPAERPGPPTP). The interaction with TRAF2 stretch occupies residues 143-147 (PVQET). Composition is skewed to polar residues over residues 145 to 165 (QETQ…QTLS) and 179 to 216 (ESSS…SLTP). Ser152, Ser157, Ser165, Ser180, and Ser188 each carry phosphoserine. The tract at residues 153–158 (PGENSE) is interaction with TRAF6. Position 215 is a phosphothreonine (Thr215). A phosphoserine mark is found at Ser222 and Ser233. The residue at position 234 (Thr234) is a Phosphothreonine. At Arg236 the chain carries Asymmetric dimethylarginine. Positions 241–266 (PGPTGSVVSTGTSFSSSSPGLASAGA) are enriched in low complexity. Ser253 and Ser258 each carry phosphoserine. Residues Lys311 and Lys325 each participate in a glycyl lysine isopeptide (Lys-Gly) (interchain with G-Cter in ubiquitin) cross-link. Disordered regions lie at residues 314–358 (ANPA…RAGM) and 373–419 (SAST…SELS). 3 stretches are compositionally biased toward polar residues: residues 317–331 (ASVS…TSSK), 339–355 (NALT…NSTR), and 373–382 (SASTVPTDGS). Positions 388–403 (TPAAPTPAGATGGSSA) are enriched in low complexity. Ser408 carries the phosphoserine modification. A pLxIS motif motif is present at residues 439–442 (LAIS). Ser442 carries the post-translational modification Phosphoserine; by TBK1. Residues 455–460 (PEENEY) are interaction with TRAF6. Residues Lys461 and Lys500 each participate in a glycyl lysine isopeptide (Lys-Gly) (interchain with G-Cter in ubiquitin) cross-link. A (Microbial infection) Glycyl lysine isopeptide (Lys-Gly) (interchain with G-Cter in UFM1) cross-link involves residue Lys461. Positions 476–507 (IQLLEGNPGPPADPDGGPRPQADRKFQEREVP) are disordered. Over residues 496–507 (QADRKFQEREVP) the composition is skewed to basic and acidic residues. The helical transmembrane segment at 514–534 (GALWLQVAVTGVLVVTLLVVL) threads the bilayer. Over 535 to 540 (YRRRLH) the chain is Mitochondrial intermembrane.

As to quaternary structure, self-associates and polymerizes (via CARD domains) to form 400 nM long three-stranded helical filaments on mitochondria, filament nucleation requires interaction with RIGI whose CARD domains act as a template for filament assembly. Interacts with RIGI, IFIH1/MDA5, TRAF2, TRAF6 and C1QBP. May interact with FADD, RIPK1, CHUK and IKBKB. Interacts (when phosphorylated) with IRF3; following activation and phosphorylation on the pLxIS motif by TBK1, recruits IRF3. Interacts with NLRX1. Interaction with NLRX1 requires the CARD domain. Interacts with PSMA7. Interacts with TRAFD1. Interacts (via C-terminus) with PCBP2 in a complex containing MAVS/IPS1, PCBP2 and ITCH. Interacts with CYLD. Interacts with SRC. Interacts with DHX58/LGP2 and IKBKE. Interacts with STING1. Interacts with IFIT3 (via N-terminus). Interacts with TBK1 only in the presence of IFIT3. Interacts with TTLL12; the interaction prevents MAVS binding to TBK1 and IKBKE. Interacts with MUL1. Interacts with ANKRD17. Interacts with NDFIP1. Interacts with SMURF1; the interaction is mediated by NDFIP1 and leads to MAVS ubiquitination and degradation. Interacts with UBXN1; this interaction inhibits MAVS-mediated antiviral pathway. Interacts (via C-terminus) with GPATCH3; the interaction is markedly increased upon viral infection. Directly interacts (via CARD domain) with ATG5 and ATG12, either as ATG5 and ATG12 monomers or as ATG12-ATG5 conjugates. Interacts with DHX33 (via the helicase C-terminal domain). Interacts with DDX3X (via C-terminus); this interaction occurs rapidly, but transiently after Sendai virus infection. The interaction with DDX3X potentiates MAVS-mediated IFNB induction. Conversely inhibition of this interaction, for instance by HCV core protein, prevents MAVS-mediated IFNB induction. Transiently interacts with TRAF3 early during Sendai virus infection. Interacts with CLPB; the interaction is enhanced by Sendai virus infection. Interacts with TRAF3IP3. Interacts with TOMM70; the interaction is enhanced by Sendai virus infection. Interacts with ZNFX1. Interacts with N4BP3; this interaction promotes the polyubiquitination of MAVS. Interacts with TAX1BP1; this interaction induces MAVS polyubiquitination. Interacts with NLRP3; promoting NLRP3 recruitment to mitochondria and activation of the NLRP3 inflammasome. Interacts with ECSIT; this interaction bridges RIGI to the MAVS complex at the mitochondrion. Interacts with UBL7; this interaction promotes MAVS 'Lys-27'-linked ubiquitination leading to type I interferon production. Interacts (via transmembrane domain) with SMIM30/MAVI1 (via transmembrane domain); the interaction disrupts MAVS interaction with RIGI and inhibits MAVS aggregation, resulting in the repression of type I interferon signaling and innate immune responses. In terms of assembly, (Microbial infection) Interacts with hepatitis C virus (HCV) NS3/4A protease; this interaction leads to MAVS cleavage, thereby preventing the establishment of an antiviral state. (Microbial infection) Interacts with hepatitis GB virus B NS3/4A protease; this interaction leads to MAVS cleavage. As to quaternary structure, (Microbial infection) Interacts with human respiratory syncytial virus/HRSV protein NS1; this interaction disrupts MAVS binding to RIGI. In terms of assembly, (Microbial infection) Interacts with Andes virus Nnon-structural protein NS-S; this interaction may reduce MAVS ubiquitination and leads to inhibition of MAVS-induced type-I IFN signaling pathway. (Microbial infection) Interacts with Seneca Valley virus protease 3C; this interaction allows the cleavage of MAVS and subsequent suppression of host innate immunity. As to quaternary structure, (Microbial infection) Interacts with SARS-CoV virus protein ORF9b; this interaction mediates MAVS proteasomal degradation. In terms of assembly, (Microbial infection) Interacts with SARS-CoV-2 virus protein M; this interaction impairs MAVS self-association and its recruitment of downstream components. (Microbial infection) Interacts with foot-and-mouth disease virus protein VP1; this interaction competes with TRAF3 interaction to MAVS leading to suppression of host innate immunity. As to quaternary structure, (Microbial infection) Interacts with Epstein-Barr virus protein BILF1; this interaction mediates MAVS routing from mitochondria to lysosomes. In terms of processing, following activation, phosphorylated by TBK1 at Ser-442 in the pLxIS motif. The phosphorylated pLxIS motif constitutes an IRF3-binding motif, leading to recruitment of the transcription factor IRF3 to induce type-I interferons and other cytokines. Ubiquitinated. Undergoes 'Lys-48'-linked polyubiquitination catalyzed by ITCH; ITCH-dependent polyubiquitination is mediated by the interaction with PCBP2 and leads to MAVS/IPS1 proteasomal degradation. Ubiquitinated by RNF125, leading to its degradation by the proteasome. Undergoes 'Lys-48'-linked ubiquitination catalyzed by SMURF1. Undergoes 'Lys-48'-linked ubiquitination catalyzed by MARCHF5 at Lys-7 and Lys-500, leading to proteasomal degradation. Ubiquitinated via 'Lys-63'-linked ubiquitination at Lys-10, Lys-311 and Lys-461 by UBE2N and TRIM31, promoting MAVS polymerization and formation of three-stranded helical filaments on mitochondria. Undergoes 'Lys-63'-linked ubiquitination leading to enhanced interaction between MAVS and TRAF2. Undergoes 'Lys-27'-linked ubiquitination by TRIM21 leading to enhanced interaction between MAVS and TBK1. Deubiquitinated by USP10 leading to attenuation of RIGI-mediated MAVS aggregation and production of type I interferon. Undergoes 'Lys-48'-linked polyubiquitination catalyzed by RNF115 leading to its degradation. Post-translationally, palmitoylated by ZHDDC4. Palmitoylation promotes MAVS stabilization and activation by inhibiting 'Lys-48'- but facilitating 'Lys-63'-linked ubiquitination. In terms of processing, proteolytically cleaved by apoptotic caspases during apoptosis, leading to its inactivation. Cleavage by CASP3 during virus-induced apoptosis inactivates it, preventing cytokine overproduction. (Microbial infection) Cleaved and degraded by hepatitis A virus (HAV) protein 3ABC allowing the virus to disrupt the activation of host IRF3 through the MDA5 pathway. Post-translationally, (Microbial infection) Cleaved by the protease 2A of coxsackievirus B3, poliovirus and enterovirus 71 allowing the virus to disrupt the host type I interferon production. In terms of processing, (Microbial infection) Cleaved by Seneca Valley virus protease 3C allowing the virus to suppress interferon type-I production. (Microbial infection) Cleaved by HCV protease NS3/4A, thereby preventing the establishment of an antiviral state. Post-translationally, (Microbial infection) UFMylated by ULF1 in association with Epstein-Barr virus BILF1; leading to MAVS routing to the lysosome. In terms of tissue distribution, present in T-cells, monocytes, epithelial cells and hepatocytes (at protein level). Ubiquitously expressed, with highest levels in heart, skeletal muscle, liver, placenta and peripheral blood leukocytes.

Its subcellular location is the mitochondrion outer membrane. It localises to the mitochondrion. It is found in the peroxisome. In terms of biological role, adapter required for innate immune defense against viruses. Acts downstream of DHX33, RIGI and IFIH1/MDA5, which detect intracellular dsRNA produced during viral replication, to coordinate pathways leading to the activation of NF-kappa-B, IRF3 and IRF7, and to the subsequent induction of antiviral cytokines such as IFNB and RANTES (CCL5). Peroxisomal and mitochondrial MAVS act sequentially to create an antiviral cellular state. Upon viral infection, peroxisomal MAVS induces the rapid interferon-independent expression of defense factors that provide short-term protection, whereas mitochondrial MAVS activates an interferon-dependent signaling pathway with delayed kinetics, which amplifies and stabilizes the antiviral response. May activate the same pathways following detection of extracellular dsRNA by TLR3. May protect cells from apoptosis. Involved in NLRP3 inflammasome activation by mediating NLRP3 recruitment to mitochondria. This chain is Mitochondrial antiviral-signaling protein, found in Homo sapiens (Human).